The primary structure comprises 648 residues: Macrolide export ATP-binding/permease protein MacB (648 aa).

Residues 1-272 (MTPLLELKDI…RALAANKMRT (272 aa)) lie on the Cytoplasmic side of the membrane. The 239-residue stretch at 5–243 (LELKDIRRSY…TGGTEPVVNT (239 aa)) folds into the ABC transporter domain. Residue 41–48 (GASGSGKS) participates in ATP binding. A helical membrane pass occupies residues 273 to 293 (LLTMLGIIIGIASVVSIVVVG). Residues 294 to 522 (DAAKQMVLAD…TVEKTTRTLQ (229 aa)) are Periplasmic-facing. Residues 523–543 (LFLTLVAVISLVVGGIGVMNI) traverse the membrane as a helical segment. Over 544-575 (MLVSVTERTREIGIRMAVGARASDVLQQFLIE) the chain is Cytoplasmic. The helical transmembrane segment at 576–596 (AVLVCLVGGALGITLSLLIAF) threads the bilayer. Topologically, residues 597 to 610 (TLQLFLPGWEIGFS) are periplasmic. A helical transmembrane segment spans residues 611–631 (PLALLLAFLCSTVTGILFGWL). Residues 632–648 (PARNAARLDPVDALARE) are Cytoplasmic-facing.

Belongs to the ABC transporter superfamily. Macrolide exporter (TC 3.A.1.122) family. Homodimer. Part of the tripartite efflux system MacAB-TolC, which is composed of an inner membrane transporter, MacB, a periplasmic membrane fusion protein, MacA, and an outer membrane component, TolC. The complex forms a large protein conduit and can translocate molecules across both the inner and outer membranes. Interacts with MacA.

The protein localises to the cell inner membrane. With respect to regulation, ATPase activity is stimulated by interaction with MacA and inhibited by vanadate. In terms of biological role, part of the tripartite efflux system MacAB-TolC. MacB is a non-canonical ABC transporter that contains transmembrane domains (TMD), which form a pore in the inner membrane, and an ATP-binding domain (NBD), which is responsible for energy generation. When overexpressed, the system confers resistance against macrolides composed of 14- and 15-membered lactones but no or weak resistance against 16-membered ones. In addition, the system could also transport R-LPS or a similar glycolipid. This Escherichia coli (strain K12) protein is Macrolide export ATP-binding/permease protein MacB.